We begin with the raw amino-acid sequence, 372 residues long: UDP-N-acetylglucosamine--N-acetylmuramyl-(pentapeptide) pyrophosphoryl-undecaprenol N-acetylglucosamine transferase (372 aa).

UDP-N-acetyl-alpha-D-glucosamine contacts are provided by residues 21–23 (TAG), N135, R172, S206, and Q303.

Belongs to the glycosyltransferase 28 family. MurG subfamily.

Its subcellular location is the cell membrane. It catalyses the reaction di-trans,octa-cis-undecaprenyl diphospho-N-acetyl-alpha-D-muramoyl-L-alanyl-D-glutamyl-meso-2,6-diaminopimeloyl-D-alanyl-D-alanine + UDP-N-acetyl-alpha-D-glucosamine = di-trans,octa-cis-undecaprenyl diphospho-[N-acetyl-alpha-D-glucosaminyl-(1-&gt;4)]-N-acetyl-alpha-D-muramoyl-L-alanyl-D-glutamyl-meso-2,6-diaminopimeloyl-D-alanyl-D-alanine + UDP + H(+). It participates in cell wall biogenesis; peptidoglycan biosynthesis. Its function is as follows. Cell wall formation. Catalyzes the transfer of a GlcNAc subunit on undecaprenyl-pyrophosphoryl-MurNAc-pentapeptide (lipid intermediate I) to form undecaprenyl-pyrophosphoryl-MurNAc-(pentapeptide)GlcNAc (lipid intermediate II). This is UDP-N-acetylglucosamine--N-acetylmuramyl-(pentapeptide) pyrophosphoryl-undecaprenol N-acetylglucosamine transferase from Paenarthrobacter aurescens (strain TC1).